Here is a 199-residue protein sequence, read N- to C-terminus: Pneumococcal vaccine antigen A homolog (199 aa).

The protein localises to the cell surface. This is Pneumococcal vaccine antigen A homolog (pvaA) from Streptococcus pyogenes serotype M6 (strain ATCC BAA-946 / MGAS10394).